The primary structure comprises 197 residues: Putative double homeobox protein 3 (197 aa).

DNA-binding regions (homeobox) lie at residues 46–105 (GRRM…LRQH) and 121–180 (GRRK…WGQS). Positions 102 to 127 (LRQHRRQSRPWPGRRDPQKGRRKRTA) are disordered.

It belongs to the paired homeobox family. In terms of tissue distribution, expressed in hepatoma Hep3B cells.

The protein localises to the nucleus. In Homo sapiens (Human), this protein is Putative double homeobox protein 3 (DUX3).